Consider the following 110-residue polypeptide: Phosphoribosyl-ATP pyrophosphatase (110 aa).

The protein belongs to the PRA-PH family.

The protein resides in the cytoplasm. It catalyses the reaction 1-(5-phospho-beta-D-ribosyl)-ATP + H2O = 1-(5-phospho-beta-D-ribosyl)-5'-AMP + diphosphate + H(+). It participates in amino-acid biosynthesis; L-histidine biosynthesis; L-histidine from 5-phospho-alpha-D-ribose 1-diphosphate: step 2/9. This is Phosphoribosyl-ATP pyrophosphatase from Stutzerimonas stutzeri (strain A1501) (Pseudomonas stutzeri).